Consider the following 283-residue polypeptide: Pantothenate synthetase (283 aa).

31–38 contacts ATP; that stretch reads MGALHDGH. His-38 acts as the Proton donor in catalysis. Position 62 (Gln-62) interacts with (R)-pantoate. Gln-62 contacts beta-alanine. 148 to 151 is an ATP binding site; that stretch reads GKKD. Position 154 (Gln-154) interacts with (R)-pantoate. ATP-binding positions include Val-177 and 185–188; that span reads KSSR.

Belongs to the pantothenate synthetase family. As to quaternary structure, homodimer.

It is found in the cytoplasm. The enzyme catalyses (R)-pantoate + beta-alanine + ATP = (R)-pantothenate + AMP + diphosphate + H(+). It functions in the pathway cofactor biosynthesis; (R)-pantothenate biosynthesis; (R)-pantothenate from (R)-pantoate and beta-alanine: step 1/1. In terms of biological role, catalyzes the condensation of pantoate with beta-alanine in an ATP-dependent reaction via a pantoyl-adenylate intermediate. This Staphylococcus aureus (strain USA300) protein is Pantothenate synthetase.